The following is a 333-amino-acid chain: Glycerol-3-phosphate dehydrogenase [NAD(P)+] (333 aa).

The NADPH site is built by tryptophan 16, arginine 36, and lysine 109. Lysine 109, glycine 137, and serine 139 together coordinate sn-glycerol 3-phosphate. Alanine 141 is an NADPH binding site. Positions 192, 245, 255, 256, and 257 each coordinate sn-glycerol 3-phosphate. Lysine 192 serves as the catalytic Proton acceptor. An NADPH-binding site is contributed by arginine 256. NADPH contacts are provided by valine 280 and glutamate 282.

Belongs to the NAD-dependent glycerol-3-phosphate dehydrogenase family.

The protein resides in the cytoplasm. The enzyme catalyses sn-glycerol 3-phosphate + NAD(+) = dihydroxyacetone phosphate + NADH + H(+). It carries out the reaction sn-glycerol 3-phosphate + NADP(+) = dihydroxyacetone phosphate + NADPH + H(+). It participates in membrane lipid metabolism; glycerophospholipid metabolism. Its function is as follows. Catalyzes the reduction of the glycolytic intermediate dihydroxyacetone phosphate (DHAP) to sn-glycerol 3-phosphate (G3P), the key precursor for phospholipid synthesis. The protein is Glycerol-3-phosphate dehydrogenase [NAD(P)+] of Parvibaculum lavamentivorans (strain DS-1 / DSM 13023 / NCIMB 13966).